Consider the following 210-residue polypeptide: Ras-related protein Rab-2-B (210 aa).

13 to 21 (GDTGVGKSC) serves as a coordination point for GTP. Residues 35 to 43 (HDLTIGVEF) carry the Effector region motif. GTP contacts are provided by residues 61–65 (DTAGQ), 119–122 (NKCD), and 149–151 (SAK). Residues Cys208 and Cys209 are each lipidated (S-geranylgeranyl cysteine).

It belongs to the small GTPase superfamily. Rab family.

The protein resides in the endoplasmic reticulum membrane. It is found in the golgi apparatus membrane. Functionally, protein transport. Probably involved in vesicular traffic. In Zea mays (Maize), this protein is Ras-related protein Rab-2-B (RAB2B).